A 1037-amino-acid chain; its full sequence is Glycine dehydrogenase (decarboxylating) A, mitochondrial (1037 aa).

Residues 1–66 constitute a mitochondrion transit peptide; that stretch reads MERARRLANK…LNGFGSQVRT (66 aa). Lys-773 is subject to N6-(pyridoxal phosphate)lysine.

The protein belongs to the GcvP family. In terms of assembly, homodimer. The glycine cleavage system is composed of four proteins: P, T, L and H. Pyridoxal 5'-phosphate serves as cofactor. As to expression, expressed in leaves, stems and roots.

It localises to the mitochondrion. It catalyses the reaction N(6)-[(R)-lipoyl]-L-lysyl-[glycine-cleavage complex H protein] + glycine + H(+) = N(6)-[(R)-S(8)-aminomethyldihydrolipoyl]-L-lysyl-[glycine-cleavage complex H protein] + CO2. Functionally, the glycine cleavage system catalyzes the degradation of glycine. The P protein binds the alpha-amino group of glycine through its pyridoxal phosphate cofactor; CO(2) is released and the remaining methylamine moiety is then transferred to the lipoamide cofactor of the H protein. The protein is Glycine dehydrogenase (decarboxylating) A, mitochondrial (GDCSPA) of Flaveria pringlei.